The following is a 259-amino-acid chain: NADP-dependent 3-hydroxy acid dehydrogenase (259 aa).

Ile11 contacts NADP(+). Ser42 is modified (phosphoserine). Thr43 is subject to Phosphothreonine. NADP(+) contacts are provided by Asp65, Asn92, Arg126, Tyr158, Lys162, and Val191. Catalysis depends on Tyr158, which acts as the Proton acceptor. Lys162 functions as the Lowers pKa of active site Tyr in the catalytic mechanism.

This sequence belongs to the short-chain dehydrogenases/reductases (SDR) family. Homotetramer.

It is found in the cytoplasm. It localises to the nucleus. It carries out the reaction L-allo-threonine + NADP(+) = aminoacetone + CO2 + NADPH. Functionally, NADP-dependent dehydrogenase with broad substrate specificity acting on 3-hydroxy acids. Catalyzes the NADP-dependent oxidation of L-allo-threonine to L-2-amino-3-keto-butyrate, which is spontaneously decarboxylated into aminoacetone. Also acts on D-threonine, L-serine, D-serine, D-3-hydroxyisobutyrate, L-3-hydroxyisobutyrate, D-glycerate and L-glycerate. This is NADP-dependent 3-hydroxy acid dehydrogenase from Schizosaccharomyces pombe (strain 972 / ATCC 24843) (Fission yeast).